The chain runs to 112 residues: Large ribosomal subunit protein uL22 (112 aa).

Belongs to the universal ribosomal protein uL22 family. Part of the 50S ribosomal subunit.

Its function is as follows. This protein binds specifically to 23S rRNA; its binding is stimulated by other ribosomal proteins, e.g. L4, L17, and L20. It is important during the early stages of 50S assembly. It makes multiple contacts with different domains of the 23S rRNA in the assembled 50S subunit and ribosome. Functionally, the globular domain of the protein is located near the polypeptide exit tunnel on the outside of the subunit, while an extended beta-hairpin is found that lines the wall of the exit tunnel in the center of the 70S ribosome. The sequence is that of Large ribosomal subunit protein uL22 from Desulfovibrio desulfuricans (strain ATCC 27774 / DSM 6949 / MB).